The following is a 520-amino-acid chain: MSTTAYPDTILIIDFGSQVTQLIARRVREANVYCEIVPFQSADEAFKRLQPKGVILSGSPHSTTDIGSPRAPQAIFDAGIPVLGICYGEQTMCAQLGGNVESGHDREFGRAFLDVQEDSPLFAGIWAKGTRHQVWMSHGDRVTSLPDGFTIIGTSPNAPYAVIADEKRKYYGVQFHPEVVHTPDGAKLLQNFVHRIVGVKPGWTMGAYREQAVEAIRKQVGSGKVICALSGGVDSSVAALLAHEAVGDQLTCILVDHGLMRKDEAQQVVEMFREHYNLPLILVDASDRFIGALEGESDPEKKRKTIGRLFIEVFEEEARKLGGADFLVQGTLYPDVIESVSFTGGPSVTIKSHHNVGGLPERMKMQLVEPLRELFKDEVRLLGKELGLPDSFIGRHPFPGPGLAIRCPGGVTRGKLEILREADAIYLDEIRKAGLYDAIWQAFAVLLPVQTVGVMGDGRTYEFVCALRAVTSVDGMTADFYHYDMNFLGNAATRIINEVRGINRVVYDVTSKPPGTIEWE.

Positions 9–202 (TILIIDFGSQ…VHRIVGVKPG (194 aa)) constitute a Glutamine amidotransferase type-1 domain. Catalysis depends on C86, which acts as the Nucleophile. Catalysis depends on residues H176 and E178. Residues 203–395 (WTMGAYREQA…LGLPDSFIGR (193 aa)) form the GMPS ATP-PPase domain. 230-236 (SGGVDSS) provides a ligand contact to ATP.

Homodimer.

It carries out the reaction XMP + L-glutamine + ATP + H2O = GMP + L-glutamate + AMP + diphosphate + 2 H(+). It functions in the pathway purine metabolism; GMP biosynthesis; GMP from XMP (L-Gln route): step 1/1. Its function is as follows. Catalyzes the synthesis of GMP from XMP. The chain is GMP synthase [glutamine-hydrolyzing] from Brucella canis (strain ATCC 23365 / NCTC 10854 / RM-666).